The primary structure comprises 89 residues: Small ribosomal subunit protein uS15 (89 aa).

The protein belongs to the universal ribosomal protein uS15 family. As to quaternary structure, part of the 30S ribosomal subunit. Forms a bridge to the 50S subunit in the 70S ribosome, contacting the 23S rRNA.

Its function is as follows. One of the primary rRNA binding proteins, it binds directly to 16S rRNA where it helps nucleate assembly of the platform of the 30S subunit by binding and bridging several RNA helices of the 16S rRNA. In terms of biological role, forms an intersubunit bridge (bridge B4) with the 23S rRNA of the 50S subunit in the ribosome. This is Small ribosomal subunit protein uS15 from Geobacillus thermodenitrificans (strain NG80-2).